Reading from the N-terminus, the 343-residue chain is Small ribosomal subunit biogenesis GTPase RsgA (343 aa).

Residues 116-275 (HGQLKPVAAN…LIDSPGIREF (160 aa)) form the CP-type G domain. GTP-binding positions include 163 to 166 (NKAD) and 217 to 225 (GQSGVGKSS). Zn(2+) is bound by residues cysteine 299, cysteine 304, histidine 306, and cysteine 312.

This sequence belongs to the TRAFAC class YlqF/YawG GTPase family. RsgA subfamily. In terms of assembly, monomer. Associates with 30S ribosomal subunit, binds 16S rRNA. Zn(2+) is required as a cofactor.

Its subcellular location is the cytoplasm. Its function is as follows. One of several proteins that assist in the late maturation steps of the functional core of the 30S ribosomal subunit. Helps release RbfA from mature subunits. May play a role in the assembly of ribosomal proteins into the subunit. Circularly permuted GTPase that catalyzes slow GTP hydrolysis, GTPase activity is stimulated by the 30S ribosomal subunit. This is Small ribosomal subunit biogenesis GTPase RsgA from Pseudomonas putida (strain ATCC 700007 / DSM 6899 / JCM 31910 / BCRC 17059 / LMG 24140 / F1).